The primary structure comprises 233 residues: Merozoite surface protein 1 (233 aa).

A signal peptide spans 1–19 (MKIIFFLCSFLFFIINTQC). A compositionally biased stretch (polar residues) spans 58 to 67 (SGTAVTTSTP). Residues 58 to 110 (SGTAVTTSTPGSKGSVASGGSGGSVASGGSVASGGSGNSRRTNPSDNSSDSDA) are disordered. Over residues 74-94 (ASGGSGGSVASGGSVASGGSG) the composition is skewed to gly residues. A compositionally biased stretch (polar residues) spans 95-107 (NSRRTNPSDNSSD). Asn-104 carries an N-linked (GlcNAc...) asparagine glycan.

In terms of assembly, forms a complex composed of subunits p83, p30, p38, and p42 which remain non-covalently associated; the complex is formed at the merozoite surface prior to egress from host erythrocytes. Forms a complex composed of processed MSP1 subunits, MSP6 subunit p36 and MSP7; the complex is formed at the merozoite surface prior to egress from host erythrocytes. Within the complex, interacts (via subunit p38) with MSP6 subunit p36 and (via subunits p83, p30 and p38) with MSP7 (via subunit p22). Forms a complex composed of MSP1, MSP6, DBLMSP1 and DBLMSP2. Within the complex, interacts (via subunit p38) with DBLMSP1 and DBLMSP2. Forms a complex composed of MSP1, and rhoptry proteins RhopH3, RAP1 and CLAG9/RhopH3. Within the complex, interacts (via subunits p42 and p19) with RhopH3 (via C-terminus). Forms a complex composed of MSP1, MSP6, MSP7, MSP9 and MSP3; within the complex, MSP6 and MSP9 mediate the binding to the host erythrocyte. Interacts (via subunits p19 and p42) with MSP9; the interaction is direct; MSP1 subunits p19 or p42, and MSP9 form a co-ligand complex that interacts with host SLC4A1/Band 3 protein. May interact with PFD6. Interacts with host spectrin. Post-translationally, the p190 precursor is cleaved by SUB1 prior to merozoite egress into 4 subunits p83, p30, p38, and p42 which remain non-covalently associated. SUB1-mediated proteolytic cleavage occurs in an orderly manner; the first cleavage occurs at the p83/p30 site, followed by cleavage at the p30/p38 site, the last cleavage occurs at the p38/p42 site. The order of cleavage is essential for parasite viability. SUB1-mediated processing is essential for merozoite egress. In a second processing step during erythrocyte invasion, p42 is cleaved by SUB2 into p33 and p19; the latter remains attached to the merozoite surface via its GPI-anchor and stays on the surface during the subsequent ring stage.

It localises to the cell membrane. The protein localises to the secreted. In terms of biological role, during the asexual blood stage, involved in merozoite egress from host erythrocytes possibly via its interaction with the host cytoskeleton protein spectrin resulting in the destabilization of the host cytoskeleton and thus leading to erythrocyte cell membrane rupture. Involved in the binding to host erythrocytes and is required for host erythrocyte invasion. This Plasmodium falciparum (isolate CDC / Honduras) protein is Merozoite surface protein 1.